Reading from the N-terminus, the 689-residue chain is Elongation factor G (689 aa).

Residues 8 to 282 (ERTRNIGIMA…GVVAYMPSPL (275 aa)) enclose the tr-type G domain. GTP contacts are provided by residues 17–24 (AHIDAGKT), 81–85 (DTPGH), and 135–138 (NKMD).

Belongs to the TRAFAC class translation factor GTPase superfamily. Classic translation factor GTPase family. EF-G/EF-2 subfamily.

The protein localises to the cytoplasm. Functionally, catalyzes the GTP-dependent ribosomal translocation step during translation elongation. During this step, the ribosome changes from the pre-translocational (PRE) to the post-translocational (POST) state as the newly formed A-site-bound peptidyl-tRNA and P-site-bound deacylated tRNA move to the P and E sites, respectively. Catalyzes the coordinated movement of the two tRNA molecules, the mRNA and conformational changes in the ribosome. This Alkaliphilus metalliredigens (strain QYMF) protein is Elongation factor G.